We begin with the raw amino-acid sequence, 1468 residues long: DNA polymerase alpha catalytic subunit A (1468 aa).

Residues methionine 1–arginine 12 show a composition bias toward basic and acidic residues. Disordered stretches follow at residues methionine 1–aspartate 34, glycine 71–isoleucine 135, and asparagine 166–serine 205. N-acetylserine is present on serine 2. At serine 31 the chain carries Phosphoserine. The segment covering glycine 71 to aspartate 80 has biased composition (basic and acidic residues). 5 positions are modified to phosphoserine: serine 82, serine 83, serine 84, serine 169, and serine 170. Positions asparagine 166–lysine 176 are enriched in polar residues. Residue threonine 172 is modified to Phosphothreonine. The segment covering asparagine 183–serine 205 has biased composition (basic and acidic residues). Residues serine 240 and serine 274 each carry the phosphoserine modification. Residues leucine 256–aspartate 275 are disordered. Residues alanine 266–aspartate 275 are compositionally biased toward acidic residues. Residues threonine 309 and threonine 313 each carry the phosphothreonine modification. Residues proline 813 to asparagine 837 form a disordered region. The tract at residues lysine 1246–serine 1381 is DNA-binding. Zn(2+) is bound by residues cysteine 1287, cysteine 1290, cysteine 1314, cysteine 1317, cysteine 1348, cysteine 1353, cysteine 1367, and cysteine 1372. The segment at cysteine 1287–cysteine 1317 adopts a CysA-type zinc-finger fold. Positions cysteine 1348–cysteine 1372 match the CysB motif motif.

The protein belongs to the DNA polymerase type-B family. As to quaternary structure, DNA polymerase alpha:primase is a four subunit enzyme complex, which is assembled throughout the cell cycle, and consists of the two DNA polymerase subunits A POL1 and B POL12, and the DNA primase large PRI2 and small PRI1 subunits. Subunit B POL12 binds to subunit A POL1. POL1 interacts with CDC13, POB3, SPT16 and MCM10.

The protein localises to the nucleus. It catalyses the reaction DNA(n) + a 2'-deoxyribonucleoside 5'-triphosphate = DNA(n+1) + diphosphate. Catalytic component of DNA polymerase alpha, which in complex with DNA primase (DNA polymerase alpha:primase) constitutes a replicative polymerase. POL1 has a role in promoting telomere replication during interaction with CDC13. This chain is DNA polymerase alpha catalytic subunit A (POL1), found in Saccharomyces cerevisiae (strain ATCC 204508 / S288c) (Baker's yeast).